A 467-amino-acid polypeptide reads, in one-letter code: Repressible acid phosphatase (467 aa).

The N-terminal stretch at M1–A17 is a signal peptide. H75 (nucleophile) is an active-site residue. N-linked (GlcNAc...) asparagine glycosylation is found at N97, N103, N162, N192, N250, and N315. D338 functions as the Proton donor in the catalytic mechanism. 6 N-linked (GlcNAc...) asparagine glycosylation sites follow: N356, N390, N439, N445, N456, and N461.

The protein belongs to the histidine acid phosphatase family. Glycosylated during secretion across the membrane.

It localises to the secreted. It carries out the reaction a phosphate monoester + H2O = an alcohol + phosphate. Its function is as follows. Partially mediates extracellular nucleotide derived phosphate hydrolysis along with NPP1 and NPP2. The protein is Repressible acid phosphatase (PHO5) of Saccharomyces cerevisiae (strain ATCC 204508 / S288c) (Baker's yeast).